The primary structure comprises 58 residues: Large ribosomal subunit protein bL32 (58 aa).

Positions methionine 1–glutamine 20 are enriched in basic residues. The tract at residues methionine 1 to asparagine 26 is disordered.

The protein belongs to the bacterial ribosomal protein bL32 family.

The sequence is that of Large ribosomal subunit protein bL32 from Desulfatibacillum aliphaticivorans.